A 295-amino-acid chain; its full sequence is Origin of replication complex subunit 6 (295 aa).

A disordered region spans residues 212–295; that stretch reads PSKRKHDDDS…MALEVSSAAN (84 aa). The segment covering 220–236 has biased composition (acidic residues); that stretch reads DSDSSGESSGDDQDELD. Polar residues predominate over residues 254–263; it reads WKSSVLSNKQ.

This sequence belongs to the ORC6 family. As to quaternary structure, component of the origin recognition complex (ORC) composed of at least ORC1, ORC2, ORC3, ORC4, ORC5 and ORC6. ORC is regulated in a cell-cycle and development dependent manner. It is sequentially assembled at the exit from anaphase of mitosis and disassembled as cells enter S phase.

The protein resides in the nucleus. Its function is as follows. Component of the origin recognition complex (ORC) that binds origins of replication. DNA-binding is ATP-dependent. The specific DNA sequences that define origins of replication have not been identified yet. ORC is required to assemble the pre-replication complex necessary to initiate DNA replication. The polypeptide is Origin of replication complex subunit 6 (Oryza sativa subsp. japonica (Rice)).